The following is a 75-amino-acid chain: Large ribosomal subunit protein bL31 (75 aa).

Zn(2+) contacts are provided by Cys16, Cys18, Cys36, and Cys39.

This sequence belongs to the bacterial ribosomal protein bL31 family. Type A subfamily. In terms of assembly, part of the 50S ribosomal subunit. Zn(2+) serves as cofactor.

In terms of biological role, binds the 23S rRNA. This chain is Large ribosomal subunit protein bL31, found in Desulforapulum autotrophicum (strain ATCC 43914 / DSM 3382 / VKM B-1955 / HRM2) (Desulfobacterium autotrophicum).